A 543-amino-acid chain; its full sequence is Probable bifunctional tRNA threonylcarbamoyladenosine biosynthesis protein (543 aa).

Residues 1–329 (MDISKDLICI…YRSDMVEVNW (329 aa)) form a kae1 region. Residues His112, His116, and Tyr133 each contribute to the Fe cation site. L-threonylcarbamoyladenylate-binding positions include 133–137 (YVSGG), Asp165, Gly178, Glu182, and Asn262. Fe cation is bound at residue Asp290. One can recognise a Protein kinase domain in the interval 342 to 543 (IIPEHLIGKG…KEVEKRARYL (202 aa)). Residues 348–356 (IGKGAEADI) and Lys369 contribute to the ATP site. Asp461 (proton acceptor; for kinase activity) is an active-site residue.

The protein in the N-terminal section; belongs to the KAE1 / TsaD family. In the C-terminal section; belongs to the protein kinase superfamily. Tyr protein kinase family. BUD32 subfamily. In terms of assembly, component of the KEOPS complex that consists of Kae1, Bud32, Cgi121 and Pcc1; the whole complex dimerizes. Requires Fe(2+) as cofactor.

The protein resides in the cytoplasm. The catalysed reaction is L-seryl-[protein] + ATP = O-phospho-L-seryl-[protein] + ADP + H(+). It catalyses the reaction L-threonyl-[protein] + ATP = O-phospho-L-threonyl-[protein] + ADP + H(+). The enzyme catalyses L-threonylcarbamoyladenylate + adenosine(37) in tRNA = N(6)-L-threonylcarbamoyladenosine(37) in tRNA + AMP + H(+). Its function is as follows. Required for the formation of a threonylcarbamoyl group on adenosine at position 37 (t(6)A37) in tRNAs that read codons beginning with adenine. Is a component of the KEOPS complex that is probably involved in the transfer of the threonylcarbamoyl moiety of threonylcarbamoyl-AMP (TC-AMP) to the N6 group of A37. The Kae1 domain likely plays a direct catalytic role in this reaction. The Bud32 domain probably displays kinase activity that regulates Kae1 function. The chain is Probable bifunctional tRNA threonylcarbamoyladenosine biosynthesis protein from Methanococcus maripaludis (strain C6 / ATCC BAA-1332).